We begin with the raw amino-acid sequence, 133 residues long: Hemoglobin subunit alpha-2 (133 aa).

A Globin domain is found at 1–133 (NVKAVWEHVK…VKNVLTSRYR (133 aa)). His50 is an O2 binding site. His79 provides a ligand contact to heme b.

The protein belongs to the globin family. Minor hemoglobin is a heterotetramer of two alpha-2 chains and two beta-2 chains. Red blood cells.

In terms of biological role, involved in oxygen transport from the lung to the various peripheral tissues. The chain is Hemoglobin subunit alpha-2 from Pleurodeles waltl (Iberian ribbed newt).